Here is a 122-residue protein sequence, read N- to C-terminus: Large ribosomal subunit protein uL14c (122 aa).

It belongs to the universal ribosomal protein uL14 family. In terms of assembly, part of the 50S ribosomal subunit.

The protein resides in the plastid. The protein localises to the chloroplast. Its function is as follows. Binds to 23S rRNA. This chain is Large ribosomal subunit protein uL14c, found in Ipomoea purpurea (Common morning glory).